A 566-amino-acid polypeptide reads, in one-letter code: Arginine--tRNA ligase (566 aa).

A 'HIGH' region motif is present at residues 123 to 133; that stretch reads PNVAKPFHVGH.

The protein belongs to the class-I aminoacyl-tRNA synthetase family. Monomer.

It is found in the cytoplasm. The enzyme catalyses tRNA(Arg) + L-arginine + ATP = L-arginyl-tRNA(Arg) + AMP + diphosphate. This chain is Arginine--tRNA ligase, found in Alkaliphilus metalliredigens (strain QYMF).